The primary structure comprises 202 residues: Thymidylate kinase (202 aa).

7–14 contacts ATP; it reads GIDGSGKT.

The protein belongs to the thymidylate kinase family.

It carries out the reaction dTMP + ATP = dTDP + ADP. Functionally, phosphorylation of dTMP to form dTDP in both de novo and salvage pathways of dTTP synthesis. The polypeptide is Thymidylate kinase (Ehrlichia chaffeensis (strain ATCC CRL-10679 / Arkansas)).